A 169-amino-acid chain; its full sequence is Crossover junction endodeoxyribonuclease RuvC (169 aa).

Active-site residues include Asp-11, Glu-71, and Asp-143. Residues Asp-11, Glu-71, and Asp-143 each coordinate Mg(2+).

It belongs to the RuvC family. As to quaternary structure, homodimer which binds Holliday junction (HJ) DNA. The HJ becomes 2-fold symmetrical on binding to RuvC with unstacked arms; it has a different conformation from HJ DNA in complex with RuvA. In the full resolvosome a probable DNA-RuvA(4)-RuvB(12)-RuvC(2) complex forms which resolves the HJ. The cofactor is Mg(2+).

It localises to the cytoplasm. It carries out the reaction Endonucleolytic cleavage at a junction such as a reciprocal single-stranded crossover between two homologous DNA duplexes (Holliday junction).. Functionally, the RuvA-RuvB-RuvC complex processes Holliday junction (HJ) DNA during genetic recombination and DNA repair. Endonuclease that resolves HJ intermediates. Cleaves cruciform DNA by making single-stranded nicks across the HJ at symmetrical positions within the homologous arms, yielding a 5'-phosphate and a 3'-hydroxyl group; requires a central core of homology in the junction. The consensus cleavage sequence is 5'-(A/T)TT(C/G)-3'. Cleavage occurs on the 3'-side of the TT dinucleotide at the point of strand exchange. HJ branch migration catalyzed by RuvA-RuvB allows RuvC to scan DNA until it finds its consensus sequence, where it cleaves and resolves the cruciform DNA. The protein is Crossover junction endodeoxyribonuclease RuvC of Bartonella quintana (strain Toulouse) (Rochalimaea quintana).